A 326-amino-acid polypeptide reads, in one-letter code: Thioredoxin reductase (326 aa).

Residue 40–47 (TGNNKGGQ) coordinates FAD. Cysteine 141 and cysteine 144 are disulfide-bonded. 291–300 (DVIDHVYKQA) provides a ligand contact to FAD.

It belongs to the class-II pyridine nucleotide-disulfide oxidoreductase family. As to quaternary structure, homodimer. FAD is required as a cofactor.

Its subcellular location is the cytoplasm. The catalysed reaction is [thioredoxin]-dithiol + NADP(+) = [thioredoxin]-disulfide + NADPH + H(+). The chain is Thioredoxin reductase (trxB) from Buchnera aphidicola subsp. Baizongia pistaciae (strain Bp).